The following is a 692-amino-acid chain: Elongation factor G (692 aa).

In terms of domain architecture, tr-type G spans 8 to 283; it reads NRIRNIGIAA…AVIDYLPAPT (276 aa). Residues 17-24, 81-85, and 135-138 each bind GTP; these read AHIDAGKT, DTPGH, and NKMD.

It belongs to the TRAFAC class translation factor GTPase superfamily. Classic translation factor GTPase family. EF-G/EF-2 subfamily.

It is found in the cytoplasm. Functionally, catalyzes the GTP-dependent ribosomal translocation step during translation elongation. During this step, the ribosome changes from the pre-translocational (PRE) to the post-translocational (POST) state as the newly formed A-site-bound peptidyl-tRNA and P-site-bound deacylated tRNA move to the P and E sites, respectively. Catalyzes the coordinated movement of the two tRNA molecules, the mRNA and conformational changes in the ribosome. This is Elongation factor G (fusA) from Helicobacter pylori (strain J99 / ATCC 700824) (Campylobacter pylori J99).